Reading from the N-terminus, the 497-residue chain is Glycerol kinase (497 aa).

Threonine 12 is an ADP binding site. The ATP site is built by threonine 12, threonine 13, and serine 14. A sn-glycerol 3-phosphate-binding site is contributed by threonine 12. Arginine 16 serves as a coordination point for ADP. Sn-glycerol 3-phosphate-binding residues include arginine 82, glutamate 83, tyrosine 134, and aspartate 243. The glycerol site is built by arginine 82, glutamate 83, tyrosine 134, aspartate 243, and glutamine 244. Threonine 265 and glycine 308 together coordinate ADP. The ATP site is built by threonine 265, glycine 308, glutamine 312, and glycine 411. Glycine 411 is a binding site for ADP.

Belongs to the FGGY kinase family.

It catalyses the reaction glycerol + ATP = sn-glycerol 3-phosphate + ADP + H(+). It participates in polyol metabolism; glycerol degradation via glycerol kinase pathway; sn-glycerol 3-phosphate from glycerol: step 1/1. With respect to regulation, inhibited by fructose 1,6-bisphosphate (FBP). Its function is as follows. Key enzyme in the regulation of glycerol uptake and metabolism. Catalyzes the phosphorylation of glycerol to yield sn-glycerol 3-phosphate. The chain is Glycerol kinase from Sinorhizobium fredii (strain NBRC 101917 / NGR234).